We begin with the raw amino-acid sequence, 284 residues long: Trimeric intracellular cation channel type B (284 aa).

Residues 1-15 (MESFSELSLQFSQLS) are Lumenal-facing. Residues 16–32 (MFPFFETAHYLTSVMSA) form a helical membrane-spanning segment. At 33–44 (REQAGAVDVASR) the chain is on the cytoplasmic side. Residues 45 to 68 (SPLASWFSSMLYCFGGGILSSILL) traverse the membrane as a helical segment. Residues 69–79 (AEPPVGILSNT) lie on the Lumenal side of the membrane. Residues 80 to 99 (TSIILASAVWYMVYYFPYDL) form a helical membrane-spanning segment. Residues 100-102 (FYN) are Cytoplasmic-facing. Residues 103-121 (CFFFLPIRLILAGMKEVTR) traverse the membrane as a helical segment. A 1,2-diacyl-sn-glycero-3-phospho-(1D-myo-inositol-4,5-bisphosphate) is bound by residues lysine 117 and arginine 121. Residues 122-139 (TWKILSGVAHAHSHYKDA) are Lumenal-facing. A helical transmembrane segment spans residues 140 to 157 (MLVMITIGWARGAGGGLI). Over 158–178 (SNFEQLVRGVWKPESNEFLKM) the chain is Cytoplasmic. Residues 179 to 196 (SYPVKVTLIGAVLFTLQH) traverse the membrane as a helical segment. The Lumenal portion of the chain corresponds to 197 to 204 (GQYLPISR). Residues 205–225 (HNLMFIYTLFLILIKVTMMLT) form a helical membrane-spanning segment. Residues 226-284 (RSTASPFLPLETSLQHILFSRQQIPAEVRESPSSSGDKGKPSKKTLDKDSGEQDNKKDN) are Cytoplasmic-facing. Positions 250-284 (PAEVRESPSSSGDKGKPSKKTLDKDSGEQDNKKDN) are disordered. Positions 262–284 (DKGKPSKKTLDKDSGEQDNKKDN) are enriched in basic and acidic residues.

This sequence belongs to the TMEM38 family. Homotrimer; conformation seems to be controled by binding to diacylglycerol (DAG).

The protein resides in the endoplasmic reticulum membrane. The catalysed reaction is K(+)(in) = K(+)(out). Its activity is regulated as follows. Channel activity is activated by increased cytosolic Ca(2+) levels and blocked by luminal high Ca(2+) levels. In terms of biological role, intracellular monovalent cation channel required for maintenance of rapid intracellular calcium release. Acts as a potassium counter-ion channel that functions in synchronization with calcium release from intracellular stores. Activated by increased cytosolic Ca(2+) levels. The sequence is that of Trimeric intracellular cation channel type B (tmem38b) from Xenopus tropicalis (Western clawed frog).